Consider the following 129-residue polypeptide: Large ribosomal subunit protein bL17 (129 aa).

The protein belongs to the bacterial ribosomal protein bL17 family. In terms of assembly, part of the 50S ribosomal subunit. Contacts protein L32.

The chain is Large ribosomal subunit protein bL17 from Hahella chejuensis (strain KCTC 2396).